Consider the following 100-residue polypeptide: Small ribosomal subunit protein uS14c (100 aa).

The protein belongs to the universal ribosomal protein uS14 family. In terms of assembly, part of the 30S ribosomal subunit.

The protein localises to the plastid. The protein resides in the chloroplast. Its function is as follows. Binds 16S rRNA, required for the assembly of 30S particles. In Oltmannsiellopsis viridis (Marine flagellate), this protein is Small ribosomal subunit protein uS14c.